Consider the following 213-residue polypeptide: Orotate phosphoribosyltransferase (213 aa).

Lysine 26 is a 5-phospho-alpha-D-ribose 1-diphosphate binding site. 34–35 is an orotate binding site; sequence FF. 5-phospho-alpha-D-ribose 1-diphosphate-binding positions include 72 to 73, arginine 99, lysine 100, lysine 103, histidine 105, and 124 to 132; these read YK and DDVITAGTA. Residues threonine 128 and arginine 156 each contribute to the orotate site.

The protein belongs to the purine/pyrimidine phosphoribosyltransferase family. PyrE subfamily. As to quaternary structure, homodimer. It depends on Mg(2+) as a cofactor.

It catalyses the reaction orotidine 5'-phosphate + diphosphate = orotate + 5-phospho-alpha-D-ribose 1-diphosphate. It functions in the pathway pyrimidine metabolism; UMP biosynthesis via de novo pathway; UMP from orotate: step 1/2. In terms of biological role, catalyzes the transfer of a ribosyl phosphate group from 5-phosphoribose 1-diphosphate to orotate, leading to the formation of orotidine monophosphate (OMP). The sequence is that of Orotate phosphoribosyltransferase from Pseudomonas putida (strain GB-1).